The following is an 833-amino-acid chain: Leucine--tRNA ligase (833 aa).

Residues proline 41–histidine 52 carry the 'HIGH' region motif. The short motif at lysine 610–serine 614 is the 'KMSKS' region element. Lysine 613 contacts ATP.

It belongs to the class-I aminoacyl-tRNA synthetase family.

The protein resides in the cytoplasm. It carries out the reaction tRNA(Leu) + L-leucine + ATP = L-leucyl-tRNA(Leu) + AMP + diphosphate. The sequence is that of Leucine--tRNA ligase from Streptococcus equi subsp. zooepidemicus (strain MGCS10565).